Consider the following 558-residue polypeptide: MAEEAKSKGNAAFSSGDYATAITHFTEAINLSPTNHILYSNRSASYASLHRYEEALSDAKKTIELKPDWSKGYSRLGAAFIGLSKFDEAVDSYKKGLEIDPSNEMLKSGLADASRSRVSSKSNPFVDAFQGKEMWEKLTADPGTRVYLEQDDFVKTMKEIQRNPNNLNLYMKDKRVMKALGVLLNVKFGGSSGEDTEMKEADERKEPEPEMEPMELTEEERQKKERKEKALKEKGEGNVAYKKKDFGRAVEHYTKAMELDDEDISYLTNRAAVYLEMGKYEECIEDCDKAVERGRELRSDFKMIARALTRKGSALVKMARCSKDFEPAIETFQKALTEHRNPDTLKKLNDAEKVKKELEQQEYFDPTIAEEEREKGNGFFKEQKYPEAVKHYSEAIKRNPNDVRAYSNRAACYTKLGALPEGLKDAEKCIELDPSFTKGYSRKGAIQFFMKEYDKAMETYQEGLKHDPKNQEFLDGVRRCVEQINKASRGDLTPEELKERQAKAMQDPEVQNILSDPVMRQVLVDFQENPKAAQEHMKNPMVMNKIQKLVSAGIVQVR.

4 TPR repeats span residues 2 to 35 (AEEAKSKGNAAFSSGDYATAITHFTEAINLSPTN), 37 to 69 (ILYSNRSASYASLHRYEEALSDAKKTIELKPDW), 70 to 103 (SKGYSRLGAAFIGLSKFDEAVDSYKKGLEIDPSN), and 136 to 173 (EKLTADPGTRVYLEQDDFVKTMKEIQRNPNNLNLYMKD). In terms of domain architecture, STI1 1 spans 131 to 170 (GKEMWEKLTADPGTRVYLEQDDFVKTMKEIQRNPNNLNLY). The disordered stretch occupies residues 191 to 232 (SSGEDTEMKEADERKEPEPEMEPMELTEEERQKKERKEKALK). Over residues 196-208 (TEMKEADERKEPE) the composition is skewed to basic and acidic residues. Acidic residues predominate over residues 209 to 218 (PEMEPMELTE). Basic and acidic residues predominate over residues 219-232 (EERQKKERKEKALK). The short motif at 227–244 (KEKALKEKGEGNVAYKKK) is the Bipartite nuclear localization signal element. TPR repeat units lie at residues 230-263 (ALKEKGEGNVAYKKKDFGRAVEHYTKAMELDDED), 265-297 (SYLTNRAAVYLEMGKYEECIEDCDKAVERGREL), 305-342 (ARALTRKGSALVKMARCSKDFEPAIETFQKALTEHRNP), 369-402 (AEEEREKGNGFFKEQKYPEAVKHYSEAIKRNPND), 404-436 (RAYSNRAACYTKLGALPEGLKDAEKCIELDPSF), and 437-470 (TKGYSRKGAIQFFMKEYDKAMETYQEGLKHDPKN). The STI1 2 domain maps to 507–546 (DPEVQNILSDPVMRQVLVDFQENPKAAQEHMKNPMVMNKI).

In terms of assembly, co-chaperone that forms a complex with HSP70 and HSP90 and preproteins (e.g. chloroplast preproteins). Post-translationally, phosphorylated. Acetylated.

The protein localises to the cytoplasm. It localises to the nucleus. Functionally, mediates the association of the molecular chaperones HSP70 and HSP90. Mediates nuclear encoded chloroplast preproteins binding to HSP90 prior to chloroplastic sorting. Involved in acclimation to heat. This chain is Hsp70-Hsp90 organizing protein 3 (HOP3), found in Arabidopsis thaliana (Mouse-ear cress).